Here is a 266-residue protein sequence, read N- to C-terminus: Na(+)-translocating NADH-quinone reductase subunit C (266 aa).

Residues Leu16–Gly36 traverse the membrane as a helical segment. An FMN phosphoryl threonine modification is found at Thr232.

Belongs to the NqrC family. Composed of six subunits; NqrA, NqrB, NqrC, NqrD, NqrE and NqrF. FMN serves as cofactor.

The protein resides in the cell inner membrane. The enzyme catalyses a ubiquinone + n Na(+)(in) + NADH + H(+) = a ubiquinol + n Na(+)(out) + NAD(+). Functionally, NQR complex catalyzes the reduction of ubiquinone-1 to ubiquinol by two successive reactions, coupled with the transport of Na(+) ions from the cytoplasm to the periplasm. NqrA to NqrE are probably involved in the second step, the conversion of ubisemiquinone to ubiquinol. The protein is Na(+)-translocating NADH-quinone reductase subunit C of Yersinia pestis.